We begin with the raw amino-acid sequence, 362 residues long: MNASAASLNDSQVVVVAAEGAAAAATAAGGPDTGEWGPPAAAALGAGGGANGSLELSSQLSAGPPGLLLPAVNPWDVLLCVSGTVIAGENALVVALIASTPALRTPMFVLVGSLATADLLAGCGLILHFVFQYLVPSETVSLLTVGFLVASFAASVSSLLAITVDRYLSLYNALTYYSRRTLLGVHLLLAATWTVSLGLGLLPVLGWNCLAERAACSVVRPLARSHVALLSAAFFMVFGIMLHLYVRICQVVWRHAHQIALQQHCLAPPHLAATRKGVGTLAVVLGTFGASWLPFAIYCVVGSHEDPAVYTYATLLPATYNSMINPIIYAFRNQEIQRALWLLLCGCFQSKVPFRSRSPSEV.

At 1–74 the chain is on the extracellular side; it reads MNASAASLND…PGLLLPAVNP (74 aa). 3 N-linked (GlcNAc...) asparagine glycosylation sites follow: N2, N9, and N51. A helical membrane pass occupies residues 75–94; that stretch reads WDVLLCVSGTVIAGENALVV. The Cytoplasmic portion of the chain corresponds to 95-106; the sequence is ALIASTPALRTP. The chain crosses the membrane as a helical span at residues 107-130; sequence MFVLVGSLATADLLAGCGLILHFV. Residues 131 to 142 lie on the Extracellular side of the membrane; that stretch reads FQYLVPSETVSL. A helical membrane pass occupies residues 143-164; the sequence is LTVGFLVASFAASVSSLLAITV. The Cytoplasmic portion of the chain corresponds to 165–185; that stretch reads DRYLSLYNALTYYSRRTLLGV. Residues 186–205 form a helical membrane-spanning segment; the sequence is HLLLAATWTVSLGLGLLPVL. The Extracellular segment spans residues 206–230; sequence GWNCLAERAACSVVRPLARSHVALL. Residues 231–249 form a helical membrane-spanning segment; the sequence is SAAFFMVFGIMLHLYVRIC. Topologically, residues 250–277 are cytoplasmic; that stretch reads QVVWRHAHQIALQQHCLAPPHLAATRKG. The chain crosses the membrane as a helical span at residues 278 to 304; that stretch reads VGTLAVVLGTFGASWLPFAIYCVVGSH. At 305–309 the chain is on the extracellular side; the sequence is EDPAV. Residues 310-331 traverse the membrane as a helical segment; the sequence is YTYATLLPATYNSMINPIIYAF. The Cytoplasmic portion of the chain corresponds to 332–362; it reads RNQEIQRALWLLLCGCFQSKVPFRSRSPSEV. C345 carries the S-palmitoyl cysteine lipid modification. 3 positions are modified to phosphoserine: S356, S358, and S360.

The protein belongs to the G-protein coupled receptor 1 family.

The protein resides in the cell membrane. Its function is as follows. Orphan receptor with constitutive G(s) signaling activity that activate cyclic AMP. Promotes neurite outgrowth and blocks myelin inhibition in neurons. The protein is G-protein coupled receptor 6 (GPR6) of Homo sapiens (Human).